The primary structure comprises 556 residues: Arginine--tRNA ligase (556 aa).

The 'HIGH' region signature appears at 133 to 143 (ANPTGPIHIGH).

The protein belongs to the class-I aminoacyl-tRNA synthetase family. Monomer.

It is found in the cytoplasm. The catalysed reaction is tRNA(Arg) + L-arginine + ATP = L-arginyl-tRNA(Arg) + AMP + diphosphate. The sequence is that of Arginine--tRNA ligase from Dehalococcoides mccartyi (strain CBDB1).